The chain runs to 980 residues: NACHT, LRR and PYD domains-containing protein 7 (980 aa).

One can recognise a Pyrin domain in the interval 1-93 (MTSPQLEWTL…CKMAKAEMME (93 aa)). Residues 104–123 (ELGDAEEDSELAKPGEKEGW) form a disordered region. A compositionally biased stretch (basic and acidic residues) spans 113–123 (ELAKPGEKEGW). Residues 172–491 (YTVVLHGPAG…LEKEEGEDRD (320 aa)) enclose the NACHT domain. 178-185 (GPAGVGKT) is a binding site for ATP. 9 LRR repeats span residues 614–638 (CQDL…DFEL), 674–697 (NSNL…ILCD), 760–784 (KCNL…FFYV), 788–810 (NQSL…MLLY), 817–840 (KHFL…DLAA), 845–868 (SKKL…FLCE), 874–897 (DCKL…YLSE), 902–928 (ACSL…ALEN), and 933–957 (LKHL…VKEK).

It belongs to the NLRP family. In terms of assembly, directly interacts with CASP1 and IL1B. In terms of tissue distribution, expressed in numerous tissues including uterus and ovary, with low levels in heart and brain. Not detected in skeletal muscle.

In terms of biological role, inhibits CASP1/caspase-1-dependent IL1B secretion. This Homo sapiens (Human) protein is NACHT, LRR and PYD domains-containing protein 7 (NLRP7).